The following is a 525-amino-acid chain: GMP synthase [glutamine-hydrolyzing] (525 aa).

One can recognise a Glutamine amidotransferase type-1 domain in the interval 9 to 207; the sequence is RILILDFGSQ…VRDICQCEAL (199 aa). The active-site Nucleophile is the cysteine 86. Catalysis depends on residues histidine 181 and glutamate 183. Residues 208–400 enclose the GMPS ATP-PPase domain; the sequence is WTPAKIIDDA…LGLPYDMLYR (193 aa). 235 to 241 contacts ATP; sequence SGGVDSS.

In terms of assembly, homodimer.

The enzyme catalyses XMP + L-glutamine + ATP + H2O = GMP + L-glutamate + AMP + diphosphate + 2 H(+). Its pathway is purine metabolism; GMP biosynthesis; GMP from XMP (L-Gln route): step 1/1. Its function is as follows. Catalyzes the synthesis of GMP from XMP. The protein is GMP synthase [glutamine-hydrolyzing] of Escherichia coli O139:H28 (strain E24377A / ETEC).